A 363-amino-acid chain; its full sequence is MWKKVLIAIVFITSFSFAAEVKIRDEVYVEGFRPNYLTGYGIVVGLNGTGDGTTSRYTLISIANMLRKLGIYIDPAQVRTKNAAAVMVTANLPPFAKPGMAIDVQVASIGDAKDIVNGLLIRTPLYGPDGKIYAFAQGPVSTGGGFLESNKGGKVQKGFPTAGIIPNGAIVEEELPFDFNSMTEVTLSLKNPSFSKAQEIVNVINQKYPGLAVVQDPTSIKVRLPQTKNKTEFLAEILDLKIKTDKDNIPTIVFYEKTGTVIMSGDVAIDTPVYVSHGSIYVTVEKTPVISQPPPLSGGQTVVTEGVTTKVQEEKGRIISIESAKLSDLVKALNDLGVSPYDLIAILQAIKAAGKLHAEIKVM.

An N-terminal signal peptide occupies residues 1–18 (MWKKVLIAIVFITSFSFA).

This sequence belongs to the FlgI family. As to quaternary structure, the basal body constitutes a major portion of the flagellar organelle and consists of four rings (L,P,S, and M) mounted on a central rod.

Its subcellular location is the periplasm. The protein resides in the bacterial flagellum basal body. Assembles around the rod to form the L-ring and probably protects the motor/basal body from shearing forces during rotation. The sequence is that of Flagellar P-ring protein from Sulfurihydrogenibium sp. (strain YO3AOP1).